Reading from the N-terminus, the 147-residue chain is Molybdopterin synthase catalytic subunit 1 (147 aa).

Residues 43–45 (NVR), 109–110 (HR), Lys-125, and 132–134 (KKE) contribute to the substrate site.

Belongs to the MoaE family. In terms of assembly, heterotetramer of 2 MoaD subunits and 2 MoaE subunits. Also stable as homodimer. The enzyme changes between these two forms during catalysis.

The catalysed reaction is 2 [molybdopterin-synthase sulfur-carrier protein]-C-terminal-Gly-aminoethanethioate + cyclic pyranopterin phosphate + H2O = molybdopterin + 2 [molybdopterin-synthase sulfur-carrier protein]-C-terminal Gly-Gly + 2 H(+). Its pathway is cofactor biosynthesis; molybdopterin biosynthesis. Converts molybdopterin precursor Z into molybdopterin. This requires the incorporation of two sulfur atoms into precursor Z to generate a dithiolene group. The sulfur is provided by MoaD. The chain is Molybdopterin synthase catalytic subunit 1 (moaE1) from Mycobacterium tuberculosis (strain ATCC 25618 / H37Rv).